Here is a 402-residue protein sequence, read N- to C-terminus: Multidrug resistance protein MdtH (402 aa).

The Cytoplasmic segment spans residues 1–12 (MSRVSQARNLGK). Residues 13-33 (YFLLIDNMLVVLGFFVVFPLI) traverse the membrane as a helical segment. The Periplasmic segment spans residues 34–98 (SIRFIDQMGW…GFATMGIAHE (65 aa)). A helical transmembrane segment spans residues 99-116 (PWLLWFSCFLSGLGGTLF). The Cytoplasmic segment spans residues 117–138 (DPPRSALVVKLIRPEQRGRFFS). A helical membrane pass occupies residues 139-159 (LLMMQDSAGAVIGALLGSWLL). Residues 160-164 (QYDFR) lie on the Periplasmic side of the membrane. The chain crosses the membrane as a helical span at residues 165-185 (LVCATGAILFILCALFNAWLL). Residues 186 to 213 (PAWKLSTVRTPVREGMRRVMSDKRFVTY) are Cytoplasmic-facing. The chain crosses the membrane as a helical span at residues 214–234 (VLTLAGYYMLAVQVMLMLPIM). Residues 235–243 (VNDIAGSPA) lie on the Periplasmic side of the membrane. Residues 244–264 (AVKWMYAIEACLSLTLLYPIA) form a helical membrane-spanning segment. Residues 265–276 (RWSEKRFRLEHR) lie on the Cytoplasmic side of the membrane. The chain crosses the membrane as a helical span at residues 277 to 297 (LMAGLLVMSLSMIPIGMVGNL). Over 298–299 (QQ) the chain is Periplasmic. The chain crosses the membrane as a helical span at residues 300–320 (LFTLICAFYIGSVIAEPARET). Residues 321 to 339 (LSASLADARARGSYMGFSR) lie on the Cytoplasmic side of the membrane. Residues 340-360 (LGLAIGGAIGYIGGGWLFDMG) traverse the membrane as a helical segment. Topologically, residues 361–367 (KALTQPE) are periplasmic. Residues 368-388 (LPWMMLGIIGFITFLALGWQF) form a helical membrane-spanning segment. Over 389–402 (SHKRTPRRMLEPGA) the chain is Cytoplasmic.

It belongs to the major facilitator superfamily. DHA1 family. MdtH (TC 2.A.1.2.21) subfamily.

Its subcellular location is the cell inner membrane. The polypeptide is Multidrug resistance protein MdtH (Salmonella paratyphi C (strain RKS4594)).